The chain runs to 601 residues: Elongation factor 4 (601 aa).

Residues 6 to 188 (NYIRNFSIVA…AIVRQLPPPH (183 aa)) enclose the tr-type G domain. GTP-binding positions include 18-23 (DHGKST) and 135-138 (NKVD).

The protein belongs to the TRAFAC class translation factor GTPase superfamily. Classic translation factor GTPase family. LepA subfamily.

Its subcellular location is the cell inner membrane. It carries out the reaction GTP + H2O = GDP + phosphate + H(+). In terms of biological role, required for accurate and efficient protein synthesis under certain stress conditions. May act as a fidelity factor of the translation reaction, by catalyzing a one-codon backward translocation of tRNAs on improperly translocated ribosomes. Back-translocation proceeds from a post-translocation (POST) complex to a pre-translocation (PRE) complex, thus giving elongation factor G a second chance to translocate the tRNAs correctly. Binds to ribosomes in a GTP-dependent manner. The chain is Elongation factor 4 from Bartonella quintana (strain Toulouse) (Rochalimaea quintana).